We begin with the raw amino-acid sequence, 256 residues long: Global transcriptional regulator CodY (256 aa).

A GAF domain region spans residues 1–155; sequence MSLLSKTREL…AATVIGMEIL (155 aa). A DNA-binding region (H-T-H motif) is located at residues 203-222; it reads ASKVADRVGITRSVIVNALR.

Belongs to the CodY family.

The protein resides in the cytoplasm. Functionally, DNA-binding global transcriptional regulator which is involved in the adaptive response to starvation and acts by directly or indirectly controlling the expression of numerous genes in response to nutrient availability. During rapid exponential growth, CodY is highly active and represses genes whose products allow adaptation to nutrient depletion. This is Global transcriptional regulator CodY from Staphylococcus epidermidis (strain ATCC 35984 / DSM 28319 / BCRC 17069 / CCUG 31568 / BM 3577 / RP62A).